The primary structure comprises 149 residues: Calmodulin (149 aa).

Ala-2 is subject to N-acetylalanine. 4 EF-hand domains span residues 8–43 (EQIA…LGQN), 44–79 (PTEA…KMKD), 81–116 (DSEE…LGEK), and 117–149 (LTDE…MMSK). Ca(2+) contacts are provided by Asp-21, Asp-23, Asp-25, Thr-27, Glu-32, Asp-57, Asp-59, Asn-61, Thr-63, Glu-68, Asp-94, Asp-96, Asn-98, and Glu-105. An N6,N6,N6-trimethyllysine modification is found at Lys-116. 5 residues coordinate Ca(2+): Asp-130, Asp-132, Asp-134, Gln-136, and Glu-141.

The protein belongs to the calmodulin family.

Its function is as follows. Calmodulin mediates the control of a large number of enzymes, ion channels and other proteins by Ca(2+). Among the enzymes to be stimulated by the calmodulin-Ca(2+) complex are a number of protein kinases and phosphatases. This chain is Calmodulin, found in Lumbricus rubellus (Humus earthworm).